The chain runs to 320 residues: Lipoyl synthase (320 aa).

The [4Fe-4S] cluster site is built by Cys56, Cys61, Cys67, Cys82, Cys86, Cys89, and Ser295. The Radical SAM core domain occupies 68–284 (WNRRTATFMI…REEALKRGFA (217 aa)). The segment at 300 to 320 (EQSAQAVARRTGAGRAAQTGD) is disordered. The segment covering 303–320 (AQAVARRTGAGRAAQTGD) has biased composition (low complexity).

It belongs to the radical SAM superfamily. Lipoyl synthase family. Requires [4Fe-4S] cluster as cofactor.

It is found in the cytoplasm. It catalyses the reaction [[Fe-S] cluster scaffold protein carrying a second [4Fe-4S](2+) cluster] + N(6)-octanoyl-L-lysyl-[protein] + 2 oxidized [2Fe-2S]-[ferredoxin] + 2 S-adenosyl-L-methionine + 4 H(+) = [[Fe-S] cluster scaffold protein] + N(6)-[(R)-dihydrolipoyl]-L-lysyl-[protein] + 4 Fe(3+) + 2 hydrogen sulfide + 2 5'-deoxyadenosine + 2 L-methionine + 2 reduced [2Fe-2S]-[ferredoxin]. It functions in the pathway protein modification; protein lipoylation via endogenous pathway; protein N(6)-(lipoyl)lysine from octanoyl-[acyl-carrier-protein]: step 2/2. In terms of biological role, catalyzes the radical-mediated insertion of two sulfur atoms into the C-6 and C-8 positions of the octanoyl moiety bound to the lipoyl domains of lipoate-dependent enzymes, thereby converting the octanoylated domains into lipoylated derivatives. This Symbiobacterium thermophilum (strain DSM 24528 / JCM 14929 / IAM 14863 / T) protein is Lipoyl synthase.